Reading from the N-terminus, the 703-residue chain is Leucine zipper putative tumor suppressor 3 (703 aa).

Disordered stretches follow at residues 1 to 22, 40 to 190, and 204 to 347; these read MAPADLASEGPKLEDPPAPHLF, RADP…SEPL, and FHSM…PPSP. The span at 96–107 shows a compositional bias: low complexity; sequence GSFPGPRSSGSG. Over residues 109–124 the composition is skewed to basic and acidic residues; sequence NRERPGPGRYPSEDKV. A compositionally biased stretch (polar residues) spans 205-218; the sequence is HSMQNLCPPQTNGT. Low complexity predominate over residues 251 to 268; that stretch reads DSGRNSLTSLPTYSSSYS. The segment covering 290 to 299 has biased composition (gly residues); it reads SSGGGGGGSG. Positions 304 to 324 are enriched in low complexity; the sequence is GTSDSGRASSKSGSSSSMGRS. The segment covering 325–336 has biased composition (gly residues); the sequence is GHLGSGEGGNGG. 2 positions are modified to phosphoserine: S346 and S348. Coiled coils occupy residues 348–526 and 600–669; these read SALI…SLRD and TRAL…RLRE. The disordered stretch occupies residues 665 to 703; that stretch reads RRLRERGAAGGSRTPTPQHGEEEKAWTPSRLERIESTEI. The segment covering 683-703 has biased composition (basic and acidic residues); sequence HGEEEKAWTPSRLERIESTEI.

This sequence belongs to the LZTS3 family. Interacts (via C-terminus) with SHANK3 (via PDZ domain). Interacts (via coiled coil) with SIPA1L1. Can form homooligomers. In terms of tissue distribution, detected in brain, with highest expression in brain cortex, caudate putamen, cerebellum and hippocampus. Detected in neuropil (at protein level). Detected in brain and kidney.

It localises to the synapse. The protein localises to the postsynaptic density. It is found in the cell projection. Its subcellular location is the dendritic spine. The protein resides in the dendrite. It localises to the cytoplasm. The protein localises to the cytoskeleton. In terms of biological role, may be involved in promoting the maturation of dendritic spines, probably via regulating SIPA1L1 levels at the postsynaptic density of synapses. This Rattus norvegicus (Rat) protein is Leucine zipper putative tumor suppressor 3.